Reading from the N-terminus, the 364-residue chain is MKEDSPPTVCVTGAAGFIGSWLVMRLLERGYIVRATVRNPGDMKKVKHLLELPKAETNLTLWKADLTQEGSFDEAIEGCHGVFHVATPMDFESKDPENEIIKPTIEGILSIIRSCAKAKTVKKLVYTSSAGTVNVQETQLPVYDESHWSDLDFIYSKKMTAWMYFVSKTLAEKAAMEAAKENNIDFVSIIPPLVVGPFINPTFPPSLITALSLINGAESHYSIIKQGQYVHLDDLCECHIFLYENPEAKGRYICSKQDATIHQLARMIKQKWPEYHVPTQFAGIDEELPTVSFSSKKLIDMGFKFKYDLEDMFKGAIDSCKEKGFLPYSTNEVKKGLFESSINGNVHGQKGNQKIGDEGVKLVN.

Residues Lys45 and Tyr164 each coordinate NADP(+).

The protein belongs to the NAD(P)-dependent epimerase/dehydratase family. Dihydroflavonol-4-reductase subfamily.

The catalysed reaction is a (2R,3S,4S)-leucoanthocyanidin + NADP(+) = a (2R,3R)-dihydroflavonol + NADPH + H(+). It catalyses the reaction (2S)-flavan-4-ol + NADP(+) = (2S)-flavanone + NADPH + H(+). Its pathway is pigment biosynthesis; anthocyanin biosynthesis. Bifunctional enzyme involved in flavonoid metabolism. This Callistephus chinensis (China aster) protein is Dihydroflavonol 4-reductase (F).